The chain runs to 549 residues: Glucose-6-phosphate isomerase (549 aa).

Glutamate 353 functions as the Proton donor in the catalytic mechanism. Active-site residues include histidine 384 and lysine 510.

The protein belongs to the GPI family.

It localises to the cytoplasm. The catalysed reaction is alpha-D-glucose 6-phosphate = beta-D-fructose 6-phosphate. Its pathway is carbohydrate biosynthesis; gluconeogenesis. It functions in the pathway carbohydrate degradation; glycolysis; D-glyceraldehyde 3-phosphate and glycerone phosphate from D-glucose: step 2/4. In terms of biological role, catalyzes the reversible isomerization of glucose-6-phosphate to fructose-6-phosphate. This chain is Glucose-6-phosphate isomerase, found in Mycolicibacterium smegmatis (strain ATCC 700084 / mc(2)155) (Mycobacterium smegmatis).